Consider the following 475-residue polypeptide: Putative aldehyde dehydrogenase (475 aa).

NAD(+) contacts are provided by residues 146-147 (WN) and 223-224 (GS). Glu-245 functions as the Proton acceptor in the catalytic mechanism. NAD(+) is bound at residue Leu-246. The active-site Nucleophile is the Cys-279. An NAD(+)-binding site is contributed by Glu-379.

Belongs to the aldehyde dehydrogenase family.

It catalyses the reaction an aldehyde + NAD(+) + H2O = a carboxylate + NADH + 2 H(+). In Staphylococcus aureus (strain bovine RF122 / ET3-1), this protein is Putative aldehyde dehydrogenase.